We begin with the raw amino-acid sequence, 292 residues long: Transcription factor HFR1 (292 aa).

The interval Lys-114 to Lys-153 is disordered. The segment at Pro-134–Asp-147 is basic motif; degenerate. In terms of domain architecture, bHLH spans Pro-134–Leu-183. Over residues Lys-139 to Lys-153 the composition is skewed to basic residues. Residues Ser-141 to Glu-148 carry the Nuclear localization signal motif. The segment at Glu-148–Leu-183 is helix-loop-helix motif.

Binds to FHY1 and FHL. Forms PHYA/FHY1/HFR1 complex. Homodimer and heterodimer with PIF3. Do not interact alone with either phytochrome A (phyA) or B (phyB), but REP1/PIF3 complex binds to phyA and phyB, preferentially to the Pfr forms. Forms non-functional heterodimer with PRE6, causing liberation of PIF4 from the transcriptionally inactive complex HFR1-PIF4. Repressed when bound to PRE1, PRE2 and PRE4. As to expression, mainly expressed in fruits and flowers and, to a lower extent, in leaves, stems, seedlings and roots.

It is found in the nucleus. Its function is as follows. Atypical bHLH transcription factor that regulates photomorphogenesis through modulation of phytochrome (e.g. PHYA) and cryptochrome signalings. Suppresses the transcriptional regulation activity of PIF4 by forming non-DNA-binding heterodimer. The polypeptide is Transcription factor HFR1 (Arabidopsis thaliana (Mouse-ear cress)).